A 368-amino-acid chain; its full sequence is D-alanine--D-alanine ligase (368 aa).

An ATP-grasp domain is found at Lys-151–Asp-358. Residue Arg-179–Glu-234 participates in ATP binding. The Mg(2+) site is built by Asp-313, Glu-325, and Asn-327.

It belongs to the D-alanine--D-alanine ligase family. Requires Mg(2+) as cofactor. Mn(2+) is required as a cofactor.

The protein resides in the cytoplasm. It catalyses the reaction 2 D-alanine + ATP = D-alanyl-D-alanine + ADP + phosphate + H(+). The protein operates within cell wall biogenesis; peptidoglycan biosynthesis. In terms of biological role, cell wall formation. The polypeptide is D-alanine--D-alanine ligase (Rhodococcus opacus (strain B4)).